Consider the following 1171-residue polypeptide: Kinesin-like protein GA13060 (1171 aa).

The interval 1–24 is disordered; that stretch reads MASSISRNGGFCGALQRAPPPMPP. A Kinesin motor domain is found at 40–400; the sequence is KVKVMLRVSD…IQIASRIHRL (361 aa). Disordered regions lie at residues 737-774, 798-820, 932-955, 1043-1099, and 1124-1143; these read LLGQDMSLPPDGDEDQDSGPSEVPPALPLFDDPLGSRD, LVASRASSSHHQHQHHRPSSQRS, PAYRLTPSPPKQPSHSPSQGSLPS, TSSE…QRHR, and RHSHGVGGHKKHRHRHEGNG. The span at 805 to 816 shows a compositional bias: basic residues; it reads SSHHQHQHHRPS. The span at 1043-1059 shows a compositional bias: polar residues; the sequence is TSSEAYDSGHDSNSTPR. The span at 1124–1139 shows a compositional bias: basic residues; the sequence is RHSHGVGGHKKHRHRH.

The protein belongs to the TRAFAC class myosin-kinesin ATPase superfamily. Kinesin family. KIF26 subfamily.

It is found in the cytoplasm. The protein localises to the cytoskeleton. The polypeptide is Kinesin-like protein GA13060 (Drosophila pseudoobscura pseudoobscura (Fruit fly)).